A 151-amino-acid chain; its full sequence is Endoribonuclease YbeY (151 aa).

Zn(2+)-binding residues include His114, His118, and His124.

This sequence belongs to the endoribonuclease YbeY family. Zn(2+) is required as a cofactor.

Its subcellular location is the cytoplasm. Functionally, single strand-specific metallo-endoribonuclease involved in late-stage 70S ribosome quality control and in maturation of the 3' terminus of the 16S rRNA. The sequence is that of Endoribonuclease YbeY from Hamiltonella defensa subsp. Acyrthosiphon pisum (strain 5AT).